A 385-amino-acid chain; its full sequence is 8-amino-7-oxononanoate synthase (385 aa).

Arg21 contributes to the substrate binding site. 108 to 109 is a pyridoxal 5'-phosphate binding site; sequence GF. Residue His133 participates in substrate binding. Pyridoxal 5'-phosphate is bound by residues Ser179, His207, and Thr233. N6-(pyridoxal phosphate)lysine is present on Lys236. Thr352 lines the substrate pocket.

This sequence belongs to the class-II pyridoxal-phosphate-dependent aminotransferase family. BioF subfamily. In terms of assembly, homodimer. Requires pyridoxal 5'-phosphate as cofactor.

It carries out the reaction 6-carboxyhexanoyl-[ACP] + L-alanine + H(+) = (8S)-8-amino-7-oxononanoate + holo-[ACP] + CO2. Its pathway is cofactor biosynthesis; biotin biosynthesis. Functionally, catalyzes the decarboxylative condensation of pimeloyl-[acyl-carrier protein] and L-alanine to produce 8-amino-7-oxononanoate (AON), [acyl-carrier protein], and carbon dioxide. This is 8-amino-7-oxononanoate synthase from Salmonella arizonae (strain ATCC BAA-731 / CDC346-86 / RSK2980).